The primary structure comprises 240 residues: Uridylate kinase (240 aa).

Residue 14–17 coordinates ATP; it reads KLSG. G56 serves as a coordination point for UMP. ATP contacts are provided by G57 and R61. UMP is bound by residues D76 and 137–144; that span reads TGNPFFTT. ATP-binding residues include T164, Y170, and D173.

Belongs to the UMP kinase family. In terms of assembly, homohexamer.

It is found in the cytoplasm. The enzyme catalyses UMP + ATP = UDP + ADP. Its pathway is pyrimidine metabolism; CTP biosynthesis via de novo pathway; UDP from UMP (UMPK route): step 1/1. Inhibited by UTP. Functionally, catalyzes the reversible phosphorylation of UMP to UDP. This chain is Uridylate kinase, found in Verminephrobacter eiseniae (strain EF01-2).